Reading from the N-terminus, the 304-residue chain is tRNA pseudouridine synthase B (304 aa).

Asp38 functions as the Nucleophile in the catalytic mechanism.

It belongs to the pseudouridine synthase TruB family. Type 1 subfamily.

The enzyme catalyses uridine(55) in tRNA = pseudouridine(55) in tRNA. Functionally, responsible for synthesis of pseudouridine from uracil-55 in the psi GC loop of transfer RNAs. The polypeptide is tRNA pseudouridine synthase B (Listeria monocytogenes serovar 1/2a (strain ATCC BAA-679 / EGD-e)).